A 464-amino-acid polypeptide reads, in one-letter code: Heterogeneous nuclear ribonucleoprotein K (464 aa).

M1 carries the post-translational modification N-acetylmethionine. The segment at 1 to 37 (METEQPEETFPNTETNGEFGKRPAEDMEEEQAFKRSR) is disordered. The segment at 1-276 (METEQPEETF…GRGGRPMPPS (276 aa)) is necessary for interaction with DDX1. Residues 19 to 37 (FGKRPAEDMEEEQAFKRSR) are compositionally biased toward basic and acidic residues. K34 carries the N6-acetyllysine; alternate modification. K34 participates in a covalent cross-link: Glycyl lysine isopeptide (Lys-Gly) (interchain with G-Cter in SUMO1); alternate. Residue K34 forms a Glycyl lysine isopeptide (Lys-Gly) (interchain with G-Cter in SUMO2); alternate linkage. S36 is modified (phosphoserine). T39 is subject to Phosphothreonine. The KH 1 domain occupies 42-104 (MVELRILLQS…ETIGEILKKI (63 aa)). Glycyl lysine isopeptide (Lys-Gly) (interchain with G-Cter in SUMO2) cross-links involve residues K52 and K60. A run of 2 repeats spans residues 54–76 (AGAV…NASV) and 59–62 (GKGG). Residues 54–421 (AGAVIGKGGK…QIRHESGASI (368 aa)) form a 2 X 22 AA approximate repeats region. Positions 59 to 407 (GKGGKNIKAL…LAGSIIGKGG (349 aa)) are 5 X 4 AA repeats of G-X-G-G. Residues S75 and S116 each carry the phosphoserine modification. One can recognise a KH 2 domain in the interval 144–209 (DCELRLLIHQ…DRVVECIKII (66 aa)). K163 is covalently cross-linked (Glycyl lysine isopeptide (Lys-Gly) (interchain with G-Cter in SUMO1); alternate). A Glycyl lysine isopeptide (Lys-Gly) (interchain with G-Cter in SUMO2); alternate cross-link involves residue K163. N6-acetyllysine is present on K198. Phosphoserine occurs at positions 214 and 216. K219 participates in a covalent cross-link: Glycyl lysine isopeptide (Lys-Gly) (interchain with G-Cter in SUMO2); alternate. An N6-succinyllysine; alternate modification is found at K219. An RNA-binding RGG-box region spans residues 236–273 (YGGFTMMFDDRRGRPVGFPMRGRGGFDRMPPGRGGRPM). 3 consecutive repeat copies span residues 245–250 (DRRGRP), 257–260 (GRGG), and 267–270 (GRGG). The tract at residues 245–329 (DRRGRPVGFP…LMAYDRRGRP (85 aa)) is 2 X 6 AA approximate repeats. A disordered region spans residues 250 to 329 (PVGFPMRGRG…LMAYDRRGRP (80 aa)). Over residues 252 to 266 (GFPMRGRGGFDRMPP) the composition is skewed to low complexity. The span at 276–285 (SRRDYDDMSP) shows a compositional bias: basic and acidic residues. Residue S284 is modified to Phosphoserine. The stretch at 295 to 298 (GRGG) is one 3-4 repeat. R316 is modified (omega-N-methylarginine). The stretch at 324-329 (DRRGRP) is one 2-2 repeat. R377 is subject to Omega-N-methylarginine. The residue at position 379 (S379) is a Phosphoserine. Y380 carries the post-translational modification Phosphotyrosine. The KH 3 domain maps to 387-451 (IITTQVTIPK…DQIQNAQYLL (65 aa)). 2 repeat units span residues 399–421 (AGSI…GASI) and 404–407 (GKGG). K405 is subject to N6-acetyllysine; alternate. K405 participates in a covalent cross-link: Glycyl lysine isopeptide (Lys-Gly) (interchain with G-Cter in SUMO2); alternate. S420 carries the post-translational modification Phosphoserine. Residue K422 forms a Glycyl lysine isopeptide (Lys-Gly) (interchain with G-Cter in SUMO1); alternate linkage. A Glycyl lysine isopeptide (Lys-Gly) (interchain with G-Cter in SUMO2); alternate cross-link involves residue K422. Residue K422 forms a Glycyl lysine isopeptide (Lys-Gly) (interchain with G-Cter in SUMO); alternate linkage.

As to quaternary structure, identified in the spliceosome C complex. Interacts with ANKRD28, RBM42 and ZIK1. Interacts with DDX1. Interacts with MDM2; this interaction leads to ubiquitination and proteasomal degradation. Interacts with p53/TP53. Interacts with BRDT. Interacts with IVNS1ABP. Interacts with PPIA/CYPA. Part of a transcription inhibitory ribonucleoprotein complex composed at least of the circular RNA circZNF827, ZNF827 and HNRNPL. Post-translationally, sumoylated by CBX4. Sumoylation is increased upon DNA damage, such as that produced by doxorubicin, etoposide, UV light and camptothecin, due to enhanced CBX4 phosphorylation by HIPK2 under these conditions. In terms of processing, ubiquitinated by MDM2. Doxorubicin treatment does not affect monoubiquitination, but slightly decreases HNRNPK poly-ubiquitination. O-glycosylated (O-GlcNAcylated), in a cell cycle-dependent manner.

The protein localises to the cytoplasm. It localises to the nucleus. The protein resides in the nucleoplasm. It is found in the cell projection. Its subcellular location is the podosome. One of the major pre-mRNA-binding proteins. Binds tenaciously to poly(C) sequences. Likely to play a role in the nuclear metabolism of hnRNAs, particularly for pre-mRNAs that contain cytidine-rich sequences. Can also bind poly(C) single-stranded DNA. Plays an important role in p53/TP53 response to DNA damage, acting at the level of both transcription activation and repression. When sumoylated, acts as a transcriptional coactivator of p53/TP53, playing a role in p21/CDKN1A and 14-3-3 sigma/SFN induction. As far as transcription repression is concerned, acts by interacting with long intergenic RNA p21 (lincRNA-p21), a non-coding RNA induced by p53/TP53. This interaction is necessary for the induction of apoptosis, but not cell cycle arrest. As part of a ribonucleoprotein complex composed at least of ZNF827, HNRNPL and the circular RNA circZNF827 that nucleates the complex on chromatin, may negatively regulate the transcription of genes involved in neuronal differentiation. In Macaca fascicularis (Crab-eating macaque), this protein is Heterogeneous nuclear ribonucleoprotein K (HNRNPK).